Consider the following 533-residue polypeptide: MGCLFSKERRSGGSDMGVSERIDVSRFQTPQQQTVFHVNNGGNEGTISQLNGTSDGMMGNGRGGGGGGGAQERETLVALYPYDSRADGDLSFQKGDAMYLLDHSNCDWWYVRHQRTGQTGYVPRNFVAKQQTIESEEWYAGKIPRNRAERLVLSSHLPKGTFLIREREADTREFALTIRDTDDQRNGGTVKHYKIKRLDHDQGYFITTRRTFRSLQELVRYYSDVPDGLCCQLTFPAPRLAPTRPDLSHDTQQNWEIPRNQLHLKRKLGDGNFGEVWYGKWRGIVEVAIKTMKPGTMSPEAFLQEAQIMKQCDHPNLVKLYAVCTREEPFYIITEYMINGSLLQYLRTDGSTLGIQALVDMAAQIANGMMYLEERKLVHRDLAARNVLVGDKISGVPVVKVADFGLARKLMEEDIYEARTGAKFPIKWTAPEAATCGNFTVKSDVWSYGILLYEIMTKGQVPYPGMHNREVVEQVELGYRMPMPRGCPEQIYEEVLLKCWDKTPDRRPTFDTLYHFFDDYFVSTQPNYAPPSA.

The N-myristoyl glycine moiety is linked to residue glycine 2. The SH3 domain maps to 71–132 (QERETLVALY…PRNFVAKQQT (62 aa)). Positions 138-237 (WYAGKIPRNR…GLCCQLTFPA (100 aa)) constitute an SH2 domain. One can recognise a Protein kinase domain in the interval 262 to 521 (LHLKRKLGDG…TLYHFFDDYF (260 aa)). ATP-binding positions include 268 to 276 (LGDGNFGEV) and lysine 290. Aspartate 381 functions as the Proton acceptor in the catalytic mechanism. Position 416 is a phosphotyrosine; by autocatalysis (tyrosine 416). Position 528 is a phosphotyrosine (tyrosine 528).

Belongs to the protein kinase superfamily. Tyr protein kinase family. SRC subfamily. As to quaternary structure, interacts (via SH2 domain and SH3 domain) with unc-5 (via cytoplasmic domain); the interaction requires kinase activity. Interacts (when activated and phosphorylated at 'Tyr-416') with ina-1 (via cytoplasmic domain) and with ced-2 (via SH2 domain). It depends on Mg(2+) as a cofactor. Requires Mn(2+) as cofactor. In terms of processing, may be phosphorylated on Tyr-528 by csk-1. As to expression, expressed in some neurons (ASE, ADF, AVA, AUA, RMDV and BAG) in the head region, anchor cell, vulva, cells around anus, body wall muscle, pharyngeal muscles in procorpus and metacorpus. Expressed in gonadal distal tip cells.

Its subcellular location is the cell membrane. It is found in the cell projection. It localises to the phagocytic cup. It catalyses the reaction L-tyrosyl-[protein] + ATP = O-phospho-L-tyrosyl-[protein] + ADP + H(+). May be activated by autophosphorylation. May be inhibited by csk-1-mediated phosphorylation. Non-receptor tyrosine-protein kinase which plays a role in endoderm development by controlling spindle orientation in EMS blastomere, probably downstream of receptor mes-1. Also involved in embryonic body morphogenesis, especially in the formation of the pharynx and the intestine. May be dispensable for pharyngeal muscle organization in the adult. Probably phosphorylates netrin receptor unc-5, to regulate distal tip cell (DTC) migration during gonad development and in axon repulsion. Plays a role in the migration of the QR neuroblast, a precursor of the AVM neuron, and in the migration of the axon cone of AVM, ALM, CAN and PVM neurons. May act downstream of migratory protein mig-13 to control AVM neuron migration. Probably downstream of integrin ina-1/pat-3, plays a role in the clearance of apoptotic cells during mid-embryogenesis. Phosphorylates ced-1 at 'Tyr-1019' which promotes ced-1 proteasomal degradation, maintaining appropriate ced-1 levels for apoptotic cell clearance. This is Tyrosine protein-kinase src-1 from Caenorhabditis elegans.